We begin with the raw amino-acid sequence, 74 residues long: Exodeoxyribonuclease 7 small subunit (74 aa).

This sequence belongs to the XseB family. Heterooligomer composed of large and small subunits.

It localises to the cytoplasm. The catalysed reaction is Exonucleolytic cleavage in either 5'- to 3'- or 3'- to 5'-direction to yield nucleoside 5'-phosphates.. In terms of biological role, bidirectionally degrades single-stranded DNA into large acid-insoluble oligonucleotides, which are then degraded further into small acid-soluble oligonucleotides. The protein is Exodeoxyribonuclease 7 small subunit of Vesicomyosocius okutanii subsp. Calyptogena okutanii (strain HA).